A 259-amino-acid polypeptide reads, in one-letter code: Hydroxyacylglutathione hydrolase (259 aa).

The Zn(2+) site is built by His-56, His-58, Asp-60, His-61, His-112, Asp-133, and His-171.

This sequence belongs to the metallo-beta-lactamase superfamily. Glyoxalase II family. Monomer. Requires Zn(2+) as cofactor.

The catalysed reaction is an S-(2-hydroxyacyl)glutathione + H2O = a 2-hydroxy carboxylate + glutathione + H(+). It participates in secondary metabolite metabolism; methylglyoxal degradation; (R)-lactate from methylglyoxal: step 2/2. In terms of biological role, thiolesterase that catalyzes the hydrolysis of S-D-lactoyl-glutathione to form glutathione and D-lactic acid. This chain is Hydroxyacylglutathione hydrolase, found in Pseudomonas putida (strain ATCC 700007 / DSM 6899 / JCM 31910 / BCRC 17059 / LMG 24140 / F1).